Here is a 132-residue protein sequence, read N- to C-terminus: Large ribosomal subunit protein bL17 (132 aa).

Belongs to the bacterial ribosomal protein bL17 family. In terms of assembly, part of the 50S ribosomal subunit. Contacts protein L32.

The protein is Large ribosomal subunit protein bL17 of Ehrlichia canis (strain Jake).